The primary structure comprises 471 residues: Glutamine synthetase (471 aa).

One can recognise a GS beta-grasp domain in the interval glutamine 14–glycine 99. Residues proline 106–cysteine 471 form the GS catalytic domain. Residues glutamate 131 and glutamate 133 each contribute to the Mg(2+) site. An ATP-binding site is contributed by glutamate 208. Mg(2+) is bound by residues glutamate 213 and glutamate 221. Residues asparagine 265–glycine 266 and glycine 266 contribute to the L-glutamate site. Histidine 270 serves as a coordination point for Mg(2+). ATP is bound by residues histidine 272–serine 274 and serine 274. L-glutamate is bound by residues arginine 322, glutamate 328, and arginine 340. Residues arginine 340, arginine 345, and lysine 354 each coordinate ATP. Glutamate 359 serves as a coordination point for Mg(2+). An L-glutamate-binding site is contributed by arginine 361. O-AMP-tyrosine is present on tyrosine 399.

It belongs to the glutamine synthetase family. Oligomer of 12 subunits arranged in the form of two hexagons. Mg(2+) is required as a cofactor.

The protein localises to the cytoplasm. The enzyme catalyses L-glutamate + NH4(+) + ATP = L-glutamine + ADP + phosphate + H(+). Its activity is regulated as follows. The activity of this enzyme could be controlled by adenylation under conditions of abundant glutamine. Its function is as follows. Involved in nitrogen metabolism via ammonium assimilation. Catalyzes the ATP-dependent biosynthesis of glutamine from glutamate and ammonia. The chain is Glutamine synthetase from Microchaete diplosiphon (Fremyella diplosiphon).